We begin with the raw amino-acid sequence, 438 residues long: Serine/threonine exchanger SteT (438 aa).

The Cytoplasmic portion of the chain corresponds to 1 to 11 (MHTEDNGLKKE). A helical transmembrane segment spans residues 12-32 (IGLLFALTLVIGTIIGSGVFM). Topologically, residues 33–45 (KPGAVLAYSGDSK) are extracellular. A helical membrane pass occupies residues 46–66 (MALFAWLLGGILTLAGGLTIA). The Cytoplasmic portion of the chain corresponds to 67 to 98 (EIGTQIPKTGGLYTYLEEVYGEFWGFLCGWVQ). The helical transmembrane segment at 99–119 (IIIYGPAIIGALGLYFGSLMA) threads the bilayer. Residues 120–126 (NLFGWGS) are Extracellular-facing. The helical transmembrane segment at 127-147 (GLSKVIGIIAVLFLCVINIIG) threads the bilayer. Residues 148–151 (TKYG) lie on the Cytoplasmic side of the membrane. The helical transmembrane segment at 152–172 (GFVQTLTTIGKLIPIACIIVF) threads the bilayer. The Extracellular portion of the chain corresponds to 173–193 (GLWKGDQHIFTAVNESISDMN). The helical transmembrane segment at 194-214 (FGAAILATLFAYDGWILLAAL) threads the bilayer. The Cytoplasmic segment spans residues 215 to 230 (GGEMKNPEKLLPRAMT). Residues 231–251 (GGLLIVTAIYIFINFALLHIL) traverse the membrane as a helical segment. Residues 252–269 (SANEIVTLGENATSTAAT) are Extracellular-facing. A helical transmembrane segment spans residues 270-290 (MLFGSIGGKLISVGIIVSIFG). Residues 291–327 (CLNGKVLSFPRVSFAMAERKQLPFAEKLSHVHPSFRT) lie on the Cytoplasmic side of the membrane. The chain crosses the membrane as a helical span at residues 328 to 348 (PWIAISFQIALALIMMLISNP). At 349–352 (DKLS) the chain is on the extracellular side. Residues 353–373 (EISIFMIYIFYVMAFFAVFIL) traverse the membrane as a helical segment. Residues 374–388 (RKRAKGEKRAYSVPL) are Cytoplasmic-facing. The helical transmembrane segment at 389–409 (YPFMPILAIAGSFFVLGSTLI) threads the bilayer. The Extracellular portion of the chain corresponds to 410–411 (TD). The helical transmembrane segment at 412–432 (TMSCGLSILIGLAGLPVYYGM) threads the bilayer. Residues 433 to 438 (KKRKAS) are Cytoplasmic-facing.

It belongs to the amino acid-polyamine-organocation (APC) superfamily. L-type amino acid transporter (LAT) (TC 2.A.3.8) family. As to quaternary structure, monomer.

Its subcellular location is the cell membrane. In terms of biological role, exhibits an obligate exchange activity for serine, threonine and aromatic amino acids. This is Serine/threonine exchanger SteT (steT) from Bacillus subtilis (strain 168).